The following is a 349-amino-acid chain: Isopentenyl-diphosphate delta-isomerase (349 aa).

Substrate is bound at residue 9 to 10 (RK). Residues 65 to 67 (AMT), Ser-95, and Asn-124 each bind FMN. Residue 95–97 (STH) participates in substrate binding. Substrate is bound at residue Gln-154. Glu-155 is a Mg(2+) binding site. FMN contacts are provided by residues Lys-186, Ser-211, Thr-216, 262-264 (GLR), and 283-284 (SR).

The protein belongs to the IPP isomerase type 2 family. In terms of assembly, homooctamer. Dimer of tetramers. The cofactor is FMN. Requires NADPH as cofactor. Mg(2+) serves as cofactor.

The protein resides in the cytoplasm. The enzyme catalyses isopentenyl diphosphate = dimethylallyl diphosphate. Involved in the biosynthesis of isoprenoids. Catalyzes the 1,3-allylic rearrangement of the homoallylic substrate isopentenyl (IPP) to its allylic isomer, dimethylallyl diphosphate (DMAPP). This is Isopentenyl-diphosphate delta-isomerase from Staphylococcus epidermidis (strain ATCC 35984 / DSM 28319 / BCRC 17069 / CCUG 31568 / BM 3577 / RP62A).